The sequence spans 555 residues: MEAEKRLFLKALKEKFEEDPKEKFTKFYTYGGWQQSARKQEFVSENEKIVAEKRGGIPMYNPDIGVPLGQRKLMPYKISNTDTYVEGDDLHFMNNAAIQQLWDDIRRTVIVGMDTAHMVLEKRLGVEVTPETINEYMHTINHSLPGGAAVVQEHMVEVHPSLAWDCYAKIFTGDDELADELDDRFVIDINKLFPEEQAEASKAAIGKKTYQVSRVPSLVGRVCDGGTISRWSAMQIGMSFITAYKLCAGEAAIADFSYAAKHADVIQMGNALLGRRARGPNELGGVRFGILSDVVQTTRVSDDPVEQSLEVVATGAALYDQIWLGSYMSGGVGFTQYATASYTDDILDDFSYYGYEYVEKKYGRCGTKATMDVVEDIASEVTLYALEQYDEYPALLEDHFGGSQRAAVAAAAAGISVCMATGNSNAGVNGWYLSQILHKEYHSRLGFYGYDLQDQCGASNSLAIRNDEASPLELRGPNYPNYAMNVGHQGEYAGIAQSAHSARGDAFATNALIKVAFADPSLVFDFSKPRKEIARGALREFEAAGERDPILPAKI.

Residue glutamine 152 coordinates coenzyme F430. Coenzyme B-binding positions include arginine 230, 261–262 (KH), and arginine 275. Tyrosine 337 and tyrosine 448 together coordinate coenzyme M.

This sequence belongs to the methyl-coenzyme M reductase alpha subunit family. In terms of assembly, MCR is a hexamer of two alpha, two beta, and two gamma chains, forming a dimer of heterotrimers. Requires coenzyme F430 as cofactor.

The protein resides in the cytoplasm. The enzyme catalyses coenzyme B + methyl-coenzyme M = methane + coenzyme M-coenzyme B heterodisulfide. The protein operates within one-carbon metabolism; methyl-coenzyme M reduction; methane from methyl-coenzyme M: step 1/1. In terms of biological role, component of the methyl-coenzyme M reductase (MCR) I that catalyzes the reductive cleavage of methyl-coenzyme M (CoM-S-CH3 or 2-(methylthio)ethanesulfonate) using coenzyme B (CoB or 7-mercaptoheptanoylthreonine phosphate) as reductant which results in the production of methane and the mixed heterodisulfide of CoB and CoM (CoM-S-S-CoB). This is the final step in methanogenesis. This chain is Methyl-coenzyme M reductase subunit alpha (mcrA), found in Methanococcus voltae.